Consider the following 345-residue polypeptide: Uroporphyrinogen decarboxylase (345 aa).

Substrate-binding positions include 23-27 (RQAGR), aspartate 73, tyrosine 149, threonine 203, and histidine 319.

The protein belongs to the uroporphyrinogen decarboxylase family. Homodimer.

It localises to the cytoplasm. The catalysed reaction is uroporphyrinogen III + 4 H(+) = coproporphyrinogen III + 4 CO2. The protein operates within porphyrin-containing compound metabolism; protoporphyrin-IX biosynthesis; coproporphyrinogen-III from 5-aminolevulinate: step 4/4. Its function is as follows. Catalyzes the decarboxylation of four acetate groups of uroporphyrinogen-III to yield coproporphyrinogen-III. This chain is Uroporphyrinogen decarboxylase, found in Vesicomyosocius okutanii subsp. Calyptogena okutanii (strain HA).